The primary structure comprises 509 residues: Poly(A) RNA polymerase GLD2-A (509 aa).

The segment at 88 to 107 (PGSPSSSFQNRKRRSDEGNV) is disordered. Residues D240 and D242 each coordinate Mg(2+). One can recognise a PAP-associated domain in the interval 409-462 (LGDLLLGFLKYFAVEFDWSKDIISVREGKALPRSDDYLWRNKYICVEEPFDGTN).

Belongs to the DNA polymerase type-B-like family. GLD2 subfamily. As to quaternary structure, component of a complex at least composed of cpeb1, cpsf1, tent2/gld2, pabpc1/ePAB, parn and sympk. Following oocyte maturation, parn is expelled from the complex. Interacts with rbfox2 and sympk. Mg(2+) serves as cofactor. It depends on Mn(2+) as a cofactor.

The protein resides in the cytoplasm. It catalyses the reaction RNA(n) + ATP = RNA(n)-3'-adenine ribonucleotide + diphosphate. In terms of biological role, cytoplasmic poly(A) RNA polymerase that adds successive AMP monomers to the 3'-end of specific RNAs, forming a poly(A) tail. In contrast to the canonical nuclear poly(A) RNA polymerase, it only adds poly(A) to selected cytoplasmic mRNAs during oocyte maturation. Plays a central role during oocyte maturation by mediating polyadenylation of dormant mRNAs, which contain 5'AAUAAA-3' sequence in their 3'UTR. In immature oocytes, polyadenylation of poly(A) tails is counteracted by the ribonuclease parn. During maturation parn is excluded from the ribonucleoprotein complex, allowing poly(A) elongation and activation of mRNAs. May not play a role in replication-dependent histone mRNA degradation. The chain is Poly(A) RNA polymerase GLD2-A (tent2-a) from Xenopus laevis (African clawed frog).